We begin with the raw amino-acid sequence, 337 residues long: 2-oxoglutarate receptor 1 (337 aa).

At 1–37 (MIETLDSPANDSDFLDYITALENCTDEQISFKMQYLP) the chain is on the extracellular side. A glycan (N-linked (GlcNAc...) asparagine) is linked at N23. The chain crosses the membrane as a helical span at residues 38–58 (VIYSIIFLVGFPGNTVAISIY). Topologically, residues 59–69 (VFKMRPWKSST) are cytoplasmic. Residues 70–90 (IIMLNLALTDLLYLTSLPFLI) form a helical membrane-spanning segment. The Extracellular segment spans residues 91-116 (HYYASGENWIFGDFMCKFIRFGFHFN). A disulfide bridge links C106 with C183. A helical membrane pass occupies residues 117–137 (LYSSILFLTCFSLFRYIVIIH). The Cytoplasmic segment spans residues 138 to 151 (PMSCFSIQKTRWAV). A helical membrane pass occupies residues 152–172 (VACAGVWVISLVAVMPMTFLI). Over 173–200 (TSTTRTNRSACLDLTSSDDLTTIKWYNL) the chain is Extracellular. Residues 201 to 221 (ILTATTFCLPLLIVTLCYTTI) traverse the membrane as a helical segment. Over 222–242 (ISTLTHGPRTHSCFKQKARRL) the chain is Cytoplasmic. The chain crosses the membrane as a helical span at residues 243 to 263 (TILLLLVFYVCFLPFHILRVI). The Extracellular segment spans residues 264 to 284 (RIESRLLSISCSIESHIHEAY). A helical transmembrane segment spans residues 285-305 (IVSRPLAALNTFGNLLLYVVV). The Cytoplasmic portion of the chain corresponds to 306–337 (SNNFQQAFCSAVRCKAIGDLEQAKKDSCSNNP).

This sequence belongs to the G-protein coupled receptor 1 family. In terms of tissue distribution, highly expressed in mast cells and is found predominantly in the tissues of the respiratory tract and kidneys.

The protein localises to the cell membrane. Functionally, g protein-coupled receptor for dicarboxylates and amino dicarboxylates. Receptor for itaconate, a metabolite produced by myeloid lineages. In the respiratory epithelium, couples the binding of itaconate to the activation of GNA11 and downstream intracellular Ca(2+) release, leading to mucocilliary clearance of airborne pathogens. Receptor for leukotriene E4 (LTE4) produced by mast cells upon allergic inflammation. Binds with high affinity to LTE4 and elicits mucin release from pulmonary epithelium in response to airborne fungi allergens. Regulates mucin-producing goblet cell homeostasis. Receptor for alpha-ketoglutarate produced by proximal tubule renal cells upon metabolic alkalosis. In an intrarenal paracrine signaling pathway, binds alpha-ketoglutarate and drives transepithelial salt reabsorption and bicarbonate secretion by SLC26A4/pendrin-positive intercalated cells. In Rattus norvegicus (Rat), this protein is 2-oxoglutarate receptor 1 (Oxgr1).